The following is a 147-amino-acid chain: Nucleoside diphosphate kinase (147 aa).

ATP is bound by residues Lys-9, Phe-57, Arg-85, Thr-91, Arg-102, and Asn-112. The Pros-phosphohistidine intermediate role is filled by His-115.

This sequence belongs to the NDK family. As to quaternary structure, homotetramer. Mg(2+) is required as a cofactor.

It is found in the cytoplasm. The enzyme catalyses a 2'-deoxyribonucleoside 5'-diphosphate + ATP = a 2'-deoxyribonucleoside 5'-triphosphate + ADP. It catalyses the reaction a ribonucleoside 5'-diphosphate + ATP = a ribonucleoside 5'-triphosphate + ADP. Functionally, major role in the synthesis of nucleoside triphosphates other than ATP. The ATP gamma phosphate is transferred to the NDP beta phosphate via a ping-pong mechanism, using a phosphorylated active-site intermediate. This chain is Nucleoside diphosphate kinase, found in Listeria monocytogenes serotype 4b (strain CLIP80459).